Here is a 302-residue protein sequence, read N- to C-terminus: tRNA pseudouridine synthase B (302 aa).

Asp-40 serves as the catalytic Nucleophile.

It belongs to the pseudouridine synthase TruB family. Type 1 subfamily.

The enzyme catalyses uridine(55) in tRNA = pseudouridine(55) in tRNA. Responsible for synthesis of pseudouridine from uracil-55 in the psi GC loop of transfer RNAs. This chain is tRNA pseudouridine synthase B, found in Shouchella clausii (strain KSM-K16) (Alkalihalobacillus clausii).